Here is a 270-residue protein sequence, read N- to C-terminus: Probable septum site-determining protein MinC (270 aa).

Belongs to the MinC family. In terms of assembly, interacts with MinD and FtsZ.

Cell division inhibitor that blocks the formation of polar Z ring septums. Rapidly oscillates between the poles of the cell to destabilize FtsZ filaments that have formed before they mature into polar Z rings. Prevents FtsZ polymerization. This is Probable septum site-determining protein MinC from Cupriavidus necator (strain ATCC 17699 / DSM 428 / KCTC 22496 / NCIMB 10442 / H16 / Stanier 337) (Ralstonia eutropha).